Here is a 160-residue protein sequence, read N- to C-terminus: Major pollen allergen Car b 1 isoforms 1A and 1B (160 aa).

This sequence belongs to the BetVI family.

This is Major pollen allergen Car b 1 isoforms 1A and 1B from Carpinus betulus (European hornbeam).